The chain runs to 235 residues: Intron-encoded endonuclease I-SceI (235 aa).

It belongs to the LAGLIDADG endonuclease family. Monomer. It depends on Mg(2+) as a cofactor.

It is found in the mitochondrion. Mitochondrial DNA endonuclease involved in intron homing. It introduces a specific double-strand break in the DNA of the 21S rRNA gene and thus mediates the insertion of an intron, containing its own coding sequence (group I intron), into an intronless gene. Specifically recognizes and cleaves the sequence 5'-TAGGGATAACAGGGTAAT-3'. This Saccharomyces cerevisiae (strain ATCC 204508 / S288c) (Baker's yeast) protein is Intron-encoded endonuclease I-SceI (SCEI).